A 320-amino-acid chain; its full sequence is Small ribosomal subunit protein uS15m (320 aa).

Disordered stretches follow at residues 37–60 (NISQKEKKRKMKQDPYGWAQAQQR) and 214–242 (QSLERPTPPLARGVEPKPQPVRAGPDTGS).

It belongs to the universal ribosomal protein uS15 family. In terms of assembly, component of the mitochondrial small ribosomal subunit (mt-SSU). Mature N.crassa 74S mitochondrial ribosomes consist of a small (37S) and a large (54S) subunit. The 37S small subunit contains a 16S ribosomal RNA (16S mt-rRNA) and 32 different proteins. The 54S large subunit contains a 23S rRNA (23S mt-rRNA) and 42 different proteins.

Its subcellular location is the mitochondrion. Functionally, component of the mitochondrial ribosome (mitoribosome), a dedicated translation machinery responsible for the synthesis of mitochondrial genome-encoded proteins, including at least some of the essential transmembrane subunits of the mitochondrial respiratory chain. The mitoribosomes are attached to the mitochondrial inner membrane and translation products are cotranslationally integrated into the membrane. The protein is Small ribosomal subunit protein uS15m (mrps28) of Neurospora crassa (strain ATCC 24698 / 74-OR23-1A / CBS 708.71 / DSM 1257 / FGSC 987).